Consider the following 987-residue polypeptide: MATGFTRPAAAPKRPQRRLTWLIPLLMILGALVPTVVDLYTDWLWFGEVDFRGVFNKVIATRIGLFVGFGLLAGIVTFLAGWFTYRGRPDELEFFDPDSPVVQYRAAVEKGVHRFLVVLPVVIGIAAGFLGQQAWQTVQLFFNRQDFGVSDQQFGMDYGFYAFTLPALRLVVSTFSVLLVVAFLIALVGHYLLGGIRAGNQAAGVKGSITNYAKVQLAVTGGLYLLVRMASYWLDRYSLLNNSHETFTGGSYTDINAVLPAKIVLLVISAVVAISFFSVIVTKDLRIPAISTVLMIVSSLAIGNAWPIMMERFSVSPNRAEKESEYISRNIEATRYAYGITDDAVTYKDNWGAKGASSEKVASDSATVSNIRLLDPEIISPTFTQQQQLRNFYGFPKSLAMDRYVIDGELRDFVVAARELDPNALKENQRDWINRHTVYTHGNGIVAAQANQVDEVARDVGSARGGYPVYTVSDLQTTDKEAQELGIVVKEPRIYYGPVIASATDGADYAVVGSENDSSVEYDTDSSTYTYQGKGGVNIGNVINRAAFAMRYQELNLILSDRVNGNSKILYDRDPRERVHNVAPWLTTDSTTYPAVIDGRVKWIVDGYTTLTSLPYAERTSLSEATNDTTAQVGNSAQRLVTDNVGYIRNSVKAVVDSYDGSVDLYEFDENDPVLKAWKGVFPGTVKAKSEISEELMNHLRYPEDMFKVQRKMLARYHVDDARDFFTNDRFWSVPSDPSATEGQKDVAQPAYYVVAADPDTGKPSFQLITPFRGLQREYLAAHMSVSSDPDNYGKITVRVLPTDTLTQGPKQAQDTMMSSDQIASDRTLWKDTNDLFNGNLLTLPVGDGDILYVEPLYSQRKNQASAFPKLLRVLVSYQGKVGYAPTIAEALSQVGIDPKEAQDLGEAKGLKPESQNRDKPEDKEGKAPSTPSAPASGSGTTGEAIGKINDALNKLQSAKNGSNEEYGRALDELDKAVEEYRKVAGQ.

The next 7 helical transmembrane spans lie at 19–39 (LTWL…VVDL), 63–83 (IGLF…AGWF), 115–135 (FLVV…QQAW), 176–196 (SVLL…LGGI), 212–234 (YAKV…SYWL), 261–281 (AKIV…SVIV), and 290–310 (ISTV…PIMM). Positions 904–927 (DLGEAKGLKPESQNRDKPEDKEGK) are enriched in basic and acidic residues. A disordered region spans residues 904–950 (DLGEAKGLKPESQNRDKPEDKEGKAPSTPSAPASGSGTTGEAIGKIN). Positions 928–943 (APSTPSAPASGSGTTG) are enriched in low complexity.

It belongs to the UPF0182 family.

It is found in the cell membrane. This is UPF0182 protein DIP0733 from Corynebacterium diphtheriae (strain ATCC 700971 / NCTC 13129 / Biotype gravis).